The chain runs to 445 residues: DNA primase DnaG (445 aa).

The Toprim domain occupies 166–252 (DAIVVVEGRS…SVEDLSRSEV (87 aa)). Residues glutamate 172, aspartate 214, and aspartate 216 each contribute to the Mg(2+) site. Residues 276-355 (EEMSQAGEST…NGDGPTIPSL (80 aa)) are disordered. Low complexity predominate over residues 284–298 (STTADGGAVAAATSD). Residues 303 to 313 (NQPSPSSQTGS) are compositionally biased toward polar residues. The segment covering 324–337 (SVVDNSNATAVADA) has biased composition (low complexity).

Belongs to the archaeal DnaG primase family. Forms a ternary complex with MCM helicase and DNA. It depends on Mg(2+) as a cofactor.

It catalyses the reaction ssDNA + n NTP = ssDNA/pppN(pN)n-1 hybrid + (n-1) diphosphate.. Functionally, RNA polymerase that catalyzes the synthesis of short RNA molecules used as primers for DNA polymerase during DNA replication. The sequence is that of DNA primase DnaG from Haloarcula marismortui (strain ATCC 43049 / DSM 3752 / JCM 8966 / VKM B-1809) (Halobacterium marismortui).